The sequence spans 547 residues: Probable acetolactate synthase (547 aa).

Thiamine diphosphate is bound at residue glutamate 57. Residues proline 159 and 299 to 318 each bind FAD; that span reads DRVE…LYGD. Residues 388–468 are thiamine pyrophosphate binding; sequence DFGSYAGRMI…VVSVIGNNGI (81 aa). Aspartate 439 and asparagine 466 together coordinate Mg(2+).

It belongs to the TPP enzyme family. Requires Mg(2+) as cofactor. The cofactor is thiamine diphosphate.

The catalysed reaction is 2 pyruvate + H(+) = (2S)-2-acetolactate + CO2. The protein operates within amino-acid biosynthesis; L-isoleucine biosynthesis; L-isoleucine from 2-oxobutanoate: step 1/4. Its pathway is amino-acid biosynthesis; L-valine biosynthesis; L-valine from pyruvate: step 1/4. The protein is Probable acetolactate synthase (ilvG) of Mycobacterium bovis (strain ATCC BAA-935 / AF2122/97).